A 90-amino-acid polypeptide reads, in one-letter code: Barrier-to-autointegration factor B (90 aa).

This sequence belongs to the BAF family. As to quaternary structure, homodimer. Interacts with nemp1a and nemp1b.

It localises to the nucleus. The protein localises to the chromosome. It is found in the nucleus envelope. The protein resides in the cytoplasm. Functionally, non-specific DNA-binding protein that plays key roles in mitotic nuclear reassembly, chromatin organization, DNA damage response, gene expression and intrinsic immunity against foreign DNA. Contains two non-specific double-stranded DNA (dsDNA)-binding sites which promote DNA cross-bridging. Plays a key role in nuclear membrane reformation at the end of mitosis by driving formation of a single nucleus in a spindle-independent manner. Transiently cross-bridges anaphase chromosomes via its ability to bridge distant DNA sites, leading to the formation of a dense chromatin network at the chromosome ensemble surface that limits membranes to the surface. Also acts as a negative regulator of innate immune activation by restricting CGAS activity toward self-DNA upon acute loss of nuclear membrane integrity. Outcompetes CGAS for DNA-binding, thereby preventing CGAS activation and subsequent damaging autoinflammatory responses. Also involved in DNA damage response; acts by inhibiting the ADP-ribosyltransferase activity of PARP1. Involved in the recognition of exogenous dsDNA in the cytosol: associates with exogenous dsDNA immediately after its appearance in the cytosol at endosome breakdown and is required to avoid autophagy. The polypeptide is Barrier-to-autointegration factor B (banf1-b) (Xenopus laevis (African clawed frog)).